The following is a 689-amino-acid chain: Homoaconitase, mitochondrial (689 aa).

A mitochondrion-targeting transit peptide spans 1–17 (MVVLRRSFHVYTRLQRG). 3 residues coordinate [4Fe-4S] cluster: Cys336, Cys403, and Cys406.

The protein belongs to the aconitase/IPM isomerase family. [4Fe-4S] cluster serves as cofactor.

It localises to the mitochondrion. The enzyme catalyses (2R,3S)-homoisocitrate = cis-homoaconitate + H2O. Its pathway is amino-acid biosynthesis; L-lysine biosynthesis via AAA pathway; L-alpha-aminoadipate from 2-oxoglutarate: step 3/5. Its function is as follows. Catalyzes the reversible hydration of cis-homoaconitate to (2R,3S)-homoisocitrate, a step in the alpha-aminoadipate pathway for lysine biosynthesis. The sequence is that of Homoaconitase, mitochondrial (LYS4) from Candida glabrata (strain ATCC 2001 / BCRC 20586 / JCM 3761 / NBRC 0622 / NRRL Y-65 / CBS 138) (Yeast).